A 242-amino-acid chain; its full sequence is Sensory transduction protein LytT (242 aa).

Positions 2 to 116 constitute a Response regulatory domain; that stretch reads HVLIVDDEPL…KITQVIEKAS (115 aa). Positions 137–241 constitute an HTH LytTR-type domain; it reads IPIQGEDRIY…VKEFKEKLGL (105 aa).

In terms of processing, phosphorylated by LytS.

The protein resides in the cytoplasm. Member of the two-component regulatory system LytS/LytT that probably regulates genes involved in cell wall metabolism. The chain is Sensory transduction protein LytT (lytT) from Enterococcus faecalis (strain ATCC 700802 / V583).